Consider the following 451-residue polypeptide: MRECISIHIGQAGIQVGNACWELYCLEHGIQADGQMPGDKTIGGGDDAFNTFFSETGAGKHVPRAVFVDLEPTVIDEVRTGTYRQLFHPEQLISGKEDAANNFARGHYTIGKEIVDLCLDRIRKLADNCTGLQGFLVFNAVGGGTGSGLGSLLLERLSVDYGKKSKLGFTVYPSPQVSTSVVEPYNSVLSTHSLLEHTDVAILLDNEAIYDICRRSLDIERPTYTNLNRLVSQVISSLTASLRFDGALNVDVNEFQTNLVPYPRIHFMLSSYAPVISAEKAYHEQLSVAEITNSAFEPSSMMAKCDPRHGKYMACCLMYRGDVVPKDVNAAVATIKTKRTIQFVDWCPTGFKCGINYQPPSVVPGGDLAKVQRAVCMISNSTSVVEVFSRIDHKFDLMYAKRAFVHWYVGEGMEEGEFSEAREDLAALEKDYEEVGAEFDEGEDGDEGDEY.

Q11 provides a ligand contact to GTP. K40 carries the post-translational modification N6-acetyllysine. Residues E71, G144, T145, T179, N206, and N228 each contribute to the GTP site. E71 serves as a coordination point for Mg(2+). E254 is an active-site residue.

This sequence belongs to the tubulin family. As to quaternary structure, dimer of alpha and beta chains. A typical microtubule is a hollow water-filled tube with an outer diameter of 25 nm and an inner diameter of 15 nM. Alpha-beta heterodimers associate head-to-tail to form protofilaments running lengthwise along the microtubule wall with the beta-tubulin subunit facing the microtubule plus end conferring a structural polarity. Microtubules usually have 13 protofilaments but different protofilament numbers can be found in some organisms and specialized cells. Mg(2+) serves as cofactor. Post-translationally, undergoes a tyrosination/detyrosination cycle, the cyclic removal and re-addition of a C-terminal tyrosine residue by the enzymes tubulin tyrosine carboxypeptidase (TTCP) and tubulin tyrosine ligase (TTL), respectively. Acetylation of alpha chains at Lys-40 stabilizes microtubules and affects affinity and processivity of microtubule motors. This modification has a role in multiple cellular functions, ranging from cell motility, cell cycle progression or cell differentiation to intracellular trafficking and signaling.

The protein resides in the cytoplasm. Its subcellular location is the cytoskeleton. The enzyme catalyses GTP + H2O = GDP + phosphate + H(+). Its function is as follows. Tubulin is the major constituent of microtubules, a cylinder consisting of laterally associated linear protofilaments composed of alpha- and beta-tubulin heterodimers. Microtubules grow by the addition of GTP-tubulin dimers to the microtubule end, where a stabilizing cap forms. Below the cap, tubulin dimers are in GDP-bound state, owing to GTPase activity of alpha-tubulin. This Zea mays (Maize) protein is Tubulin alpha-1 chain (TUBA1).